We begin with the raw amino-acid sequence, 429 residues long: Acetyltransferase pyr8 (429 aa).

The next 9 helical transmembrane spans lie at 12–32, 39–56, 69–89, 154–174, 221–241, 300–320, 324–344, 365–385, and 409–429; these read IAQE…VIIT, LRLA…RFSL, GVAA…LLIT, YVLR…LIHM, VCLN…RISA, IFFT…ILGI, GSGA…EDGV, LVGF…YLYP, and VAQK…GGEI.

The protein belongs to the wax synthase family.

The protein resides in the membrane. The protein operates within secondary metabolite biosynthesis; terpenoid biosynthesis. Acetyltransferase; part of the gene cluster that mediates the biosynthesis of pyripyropene A, a specific human acyl-coenzyme A:cholesterol acyltransferase 2 inhibitor. The first step of the pathway is the synthesis of nicotinyl-CoA from nicotinic acid by the nicotinic acid-CoA ligase pyr1. Nicotinyl-CoA is then a substrate of polyketide synthase pyr2 to produce 4-hydroxy-6-(3-pyridinyl)-2H-pyran-2-one (HPPO) which is further prenylated by the polyprenyl transferase pyr6 to yield farnesyl-HPPO. The next steps consist of an epoxidation of farnesyl-HPPO to epoxyfarnesyl-HPPO by FAD-dependent monooxygenase pyr5 and a cyclization of the terpenoid portion by the terpene cyclase pyr4 to yield deacetyl-pyripyropene E. The 2 cytochrome P450 monooxygenases pyr3 and pyr9, and the 2 acetyltransferases pyr7 and pyr8 are involved in the conversion of deacetyl-pyripyropene E into pyripyropene A through several cycles of oxidation and acetylation steps. Pyr7 acetylates deacetyl-pyripyropene E to pyripyropene E which is oxidized to 11-deacetyl-pyripyropene O by pyr3, which is in turn acetylated into pyripyropene O by pyr8. Pyripyropene O is then oxidized to deacetyl-pyripyropene A by pyr9. Deacetyl-pyripyropene A is finally acetylated to pyripyropene A by pyr8. The polypeptide is Acetyltransferase pyr8 (Aspergillus fumigatus (strain ATCC MYA-4609 / CBS 101355 / FGSC A1100 / Af293) (Neosartorya fumigata)).